Here is a 65-residue protein sequence, read N- to C-terminus: Small ribosomal subunit protein eS17 (65 aa).

It belongs to the eukaryotic ribosomal protein eS17 family.

This is Small ribosomal subunit protein eS17 from Archaeoglobus fulgidus (strain ATCC 49558 / DSM 4304 / JCM 9628 / NBRC 100126 / VC-16).